A 345-amino-acid chain; its full sequence is Dihydroorotase (345 aa).

Zn(2+) contacts are provided by His-13 and His-15. Substrate contacts are provided by residues 15–17 (HLR) and Asn-41. Zn(2+) contacts are provided by Lys-99, His-136, and His-174. Lys-99 is subject to N6-carboxylysine. Residue His-136 coordinates substrate. Leu-219 contacts substrate. Asp-247 is a binding site for Zn(2+). Residue Asp-247 is part of the active site. Positions 251 and 263 each coordinate substrate.

The protein belongs to the metallo-dependent hydrolases superfamily. DHOase family. Class II DHOase subfamily. As to quaternary structure, homodimer. The cofactor is Zn(2+).

The catalysed reaction is (S)-dihydroorotate + H2O = N-carbamoyl-L-aspartate + H(+). It participates in pyrimidine metabolism; UMP biosynthesis via de novo pathway; (S)-dihydroorotate from bicarbonate: step 3/3. Functionally, catalyzes the reversible cyclization of carbamoyl aspartate to dihydroorotate. This Acaryochloris marina (strain MBIC 11017) protein is Dihydroorotase.